The sequence spans 245 residues: Carboxy-S-adenosyl-L-methionine synthase (245 aa).

S-adenosyl-L-methionine contacts are provided by residues Tyr39, 64–66 (GSS), 117–118 (DI), and Arg199.

This sequence belongs to the class I-like SAM-binding methyltransferase superfamily. Cx-SAM synthase family. As to quaternary structure, homodimer.

It carries out the reaction prephenate + S-adenosyl-L-methionine = carboxy-S-adenosyl-L-methionine + 3-phenylpyruvate + H2O. Functionally, catalyzes the conversion of S-adenosyl-L-methionine (SAM) to carboxy-S-adenosyl-L-methionine (Cx-SAM). This Desulfotalea psychrophila (strain LSv54 / DSM 12343) protein is Carboxy-S-adenosyl-L-methionine synthase.